Here is a 271-residue protein sequence, read N- to C-terminus: Probable esterase D14L (271 aa).

The active-site Nucleophile is the S96. Residues D218 and H247 contribute to the active site.

Belongs to the AB hydrolase superfamily. As to quaternary structure, component of an intracellular receptor complex involved in the detection of the smoke compound karrikin. As to expression, expressed constitutively in all organs (e.g. roots, stems, leaves, panicles and embryos).

The protein resides in the nucleus. Its subcellular location is the cytoplasm. Functionally, may be involved in strigolactone signaling pathway. Essential for plant responses to karrikins, a class of butenolide compounds, structurally similar to strigolactones, released from burning vegetation that stimulate seed germination and enhance seedling photomorphogenesis. Mediates a specific perception of karrikin. Required for the establishment of symbiosis with the arbuscular mycorrhizal fungi (AMF) Rhizophagus irregularis and Gigaspora rosea. Karrikin binding induces a conformational change. This Oryza sativa subsp. japonica (Rice) protein is Probable esterase D14L (D14L).